A 167-amino-acid chain; its full sequence is SsrA-binding protein (167 aa).

Residues 139-158 (QNHDKRDAAKERDWQRDKQR) show a composition bias toward basic and acidic residues. The tract at residues 139 to 167 (QNHDKRDAAKERDWQRDKQRVMRRHNRDA) is disordered.

The protein belongs to the SmpB family.

The protein resides in the cytoplasm. Required for rescue of stalled ribosomes mediated by trans-translation. Binds to transfer-messenger RNA (tmRNA), required for stable association of tmRNA with ribosomes. tmRNA and SmpB together mimic tRNA shape, replacing the anticodon stem-loop with SmpB. tmRNA is encoded by the ssrA gene; the 2 termini fold to resemble tRNA(Ala) and it encodes a 'tag peptide', a short internal open reading frame. During trans-translation Ala-aminoacylated tmRNA acts like a tRNA, entering the A-site of stalled ribosomes, displacing the stalled mRNA. The ribosome then switches to translate the ORF on the tmRNA; the nascent peptide is terminated with the 'tag peptide' encoded by the tmRNA and targeted for degradation. The ribosome is freed to recommence translation, which seems to be the essential function of trans-translation. The protein is SsrA-binding protein of Xanthomonas oryzae pv. oryzae (strain PXO99A).